A 239-amino-acid polypeptide reads, in one-letter code: Tumor necrosis factor ligand superfamily member 14 (239 aa).

Over 1–37 (MESVVQPSVFVVDGQTDIPFRRLEQNHRRRRCGTVQV) the chain is Cytoplasmic. A helical; Signal-anchor for type II membrane protein transmembrane segment spans residues 38 to 58 (SLALVLLLGAGLATQGWFLLR). Topologically, residues 59–239 (LHQRLGDIVA…TRSYFGAFMV (181 aa)) are extracellular. In terms of domain architecture, THD spans 92–239 (PAAHLTGANA…TRSYFGAFMV (148 aa)). N-linked (GlcNAc...) asparagine glycosylation is present at Asn100. A disulfide bridge links Cys152 with Cys187. Asn191 is a glycosylation site (N-linked (GlcNAc...) asparagine).

The protein belongs to the tumor necrosis factor family. In terms of assembly, homotrimer. Interacts with TNFRSF14. The soluble form derives from the membrane form by proteolytic processing.

The protein localises to the cell membrane. It localises to the secreted. Cytokine that binds to TNFRSF3/LTBR. Binding to the decoy receptor TNFRSF6B modulates its effects. Activates NFKB and stimulates the proliferation of T-cells. Acts as a ligand for TNFRSF14/HVEM. Upon binding to TNFRSF14/HVEM, delivers costimulatory signals to T cells, leading to T cell proliferation and IFNG production. In Mus musculus (Mouse), this protein is Tumor necrosis factor ligand superfamily member 14 (Tnfsf14).